The sequence spans 177 residues: PLAC8-like protein 1 (177 aa).

The protein belongs to the cornifelin family.

This Homo sapiens (Human) protein is PLAC8-like protein 1 (PLAC8L1).